The chain runs to 148 residues: Ferredoxin-thioredoxin reductase catalytic chain, chloroplastic (148 aa).

The N-terminal 35 residues, 1 to 35, are a transit peptide targeting the chloroplast; it reads MKALQASTSYSFFSKSSSATLQRRTHRPQCVILSK. C87 is a [4Fe-4S] cluster binding site. Catalysis depends on C89, which acts as the Nucleophile. The cysteines at positions 89 and 119 are disulfide-linked. Positions 106, 108, and 117 each coordinate [4Fe-4S] cluster.

Belongs to the ferredoxin thioredoxin reductase beta subunit family. Heterodimer of subunit A (variable subunit) and subunit B (catalytic subunit). Heterodimeric FTR forms a complex with ferredoxin and thioredoxin. [4Fe-4S] cluster is required as a cofactor.

The protein resides in the plastid. It localises to the chloroplast. It catalyses the reaction [thioredoxin]-disulfide + 2 reduced [2Fe-2S]-[ferredoxin] + 2 H(+) = [thioredoxin]-dithiol + 2 oxidized [2Fe-2S]-[ferredoxin]. Catalytic subunit of the ferredoxin-thioredoxin reductase (FTR), which catalyzes the two-electron reduction of thioredoxins by the electrons provided by reduced ferredoxin. The sequence is that of Ferredoxin-thioredoxin reductase catalytic chain, chloroplastic from Spinacia oleracea (Spinach).